The following is a 502-amino-acid chain: Pyruvate kinase (502 aa).

A substrate-binding site is contributed by Arg-54. K(+)-binding residues include Asn-56, Ser-58, Asp-88, and Thr-89. 56–59 (NFSH) serves as a coordination point for ATP. Positions 95 and 184 each coordinate ATP. Mg(2+) is bound at residue Glu-252. Positions 275, 276, and 308 each coordinate substrate. Asp-276 contacts Mg(2+).

Belongs to the pyruvate kinase family. In terms of assembly, homotetramer. The cofactor is Mg(2+). It depends on K(+) as a cofactor.

The enzyme catalyses pyruvate + ATP = phosphoenolpyruvate + ADP + H(+). Its pathway is carbohydrate degradation; glycolysis; pyruvate from D-glyceraldehyde 3-phosphate: step 5/5. With respect to regulation, regulated by phosphoenolpyruvate substrate and is allosterically activated by ribose-5-phosphate, AMP and other nucleoside monophosphates but not by fructose-1,6-bisphosphate. The sequence is that of Pyruvate kinase (pyk) from Lactococcus lactis subsp. lactis (strain IL1403) (Streptococcus lactis).